The primary structure comprises 325 residues: Histone-lysine N-methyltransferase ATXR4 (325 aa).

Positions methionine 1–alanine 30 are cleaved as a signal peptide. The SET domain occupies proline 42 to isoleucine 295.

The protein belongs to the class V-like SAM-binding methyltransferase superfamily. Histone-lysine methyltransferase family. TRX/MLL subfamily.

The protein resides in the nucleus. It catalyses the reaction L-lysyl-[histone] + S-adenosyl-L-methionine = N(6)-methyl-L-lysyl-[histone] + S-adenosyl-L-homocysteine + H(+). Histone methyltransferase. The sequence is that of Histone-lysine N-methyltransferase ATXR4 (ATXR4) from Arabidopsis thaliana (Mouse-ear cress).